We begin with the raw amino-acid sequence, 85 residues long: Small ribosomal subunit protein bS20 (85 aa).

The protein belongs to the bacterial ribosomal protein bS20 family.

Binds directly to 16S ribosomal RNA. The protein is Small ribosomal subunit protein bS20 of Borreliella afzelii (strain PKo) (Borrelia afzelii).